Here is a 183-residue protein sequence, read N- to C-terminus: Oligoribonuclease (183 aa).

The Exonuclease domain occupies 8 to 171 (LIWIDLEMTG…DDIRDSIHEL (164 aa)). Y129 is a catalytic residue.

The protein belongs to the oligoribonuclease family.

It is found in the cytoplasm. 3'-to-5' exoribonuclease specific for small oligoribonucleotides. In Halorhodospira halophila (strain DSM 244 / SL1) (Ectothiorhodospira halophila (strain DSM 244 / SL1)), this protein is Oligoribonuclease.